The following is a 357-amino-acid chain: DNA replication and repair protein RecF (357 aa).

30–37 (GANGSGKT) provides a ligand contact to ATP.

This sequence belongs to the RecF family.

The protein localises to the cytoplasm. The RecF protein is involved in DNA metabolism; it is required for DNA replication and normal SOS inducibility. RecF binds preferentially to single-stranded, linear DNA. It also seems to bind ATP. The polypeptide is DNA replication and repair protein RecF (Enterobacter sp. (strain 638)).